A 297-amino-acid chain; its full sequence is Juvenile hormone acid O-methyltransferase (297 aa).

This sequence belongs to the methyltransferase superfamily. Predominantly expressed in corpora allata. Also expressed at low level in testis.

It catalyses the reaction (2E,6E)-farnesoate + S-adenosyl-L-methionine = methyl (2E,6E)-farnesoate + S-adenosyl-L-homocysteine. It carries out the reaction juvenile hormone III carboxylate + S-adenosyl-L-methionine = juvenile hormone III + S-adenosyl-L-homocysteine. Its function is as follows. O-methyltransferase that transfers a methyl group from S-adenosyl-L-methionine (SAM) to the carboxyl group of juvenile hormone acids to produce active juvenile hormones in the corpora allata, the last step during juvenile hormone biosynthesis. Also able to methylate farnesoate to methyl farnesoate. The chain is Juvenile hormone acid O-methyltransferase from Drosophila melanogaster (Fruit fly).